The sequence spans 467 residues: Plasma alpha-L-fucosidase (467 aa).

The first 28 residues, 1-28 (MRPQELPRLAFPLLLLLLLLLPPPPCPA), serve as a signal peptide directing secretion. N-linked (GlcNAc...) asparagine glycans are attached at residues N171 and N239. S301 is modified (phosphoserine; by FAM20C). The N-linked (GlcNAc...) asparagine glycan is linked to N377.

It belongs to the glycosyl hydrolase 29 family. As to quaternary structure, homotetramer.

It is found in the secreted. It carries out the reaction an alpha-L-fucoside + H2O = L-fucose + an alcohol. Functionally, alpha-L-fucosidase is responsible for hydrolyzing the alpha-1,6-linked fucose joined to the reducing-end N-acetylglucosamine of the carbohydrate moieties of glycoproteins. The chain is Plasma alpha-L-fucosidase (FUCA2) from Homo sapiens (Human).